The primary structure comprises 125 residues: Snaclec botrocetin subunit beta (125 aa).

Disulfide bonds link C2–C13, C30–C121, and C98–C113. In terms of domain architecture, C-type lectin spans 9–122; sequence YEGHCYRFFK…CTRFKNFVCE (114 aa).

It belongs to the snaclec family. In terms of assembly, heterodimer of subunits alpha and beta; disulfide-linked. Botrocetin and vWF form a soluble complex. As to expression, expressed by the venom gland.

The protein resides in the secreted. Functionally, snaclec that binds to von Willebrand factor (VWF) and induces its interaction with GPIbalpha (GP1BA) (via the vWF A1 domain), resulting in platelet aggregation. In Bothrops jararaca (Jararaca), this protein is Snaclec botrocetin subunit beta.